A 389-amino-acid chain; its full sequence is Chalcone synthase (389 aa).

The active site involves Cys164.

Belongs to the thiolase-like superfamily. Chalcone/stilbene synthases family.

The catalysed reaction is (E)-4-coumaroyl-CoA + 3 malonyl-CoA + 3 H(+) = 2',4,4',6'-tetrahydroxychalcone + 3 CO2 + 4 CoA. The protein operates within secondary metabolite biosynthesis; flavonoid biosynthesis. Its function is as follows. The primary product of this enzyme is 4,2',4',6'-tetrahydroxychalcone (also termed naringenin-chalcone or chalcone) which can under specific conditions spontaneously isomerize into naringenin. The polypeptide is Chalcone synthase (CHS1) (Casuarina glauca (Swamp oak)).